A 353-amino-acid polypeptide reads, in one-letter code: Methylthioribose-1-phosphate isomerase (353 aa).

Residues 51-53, Arg94, and Gln199 each bind substrate; that span reads RGA. Asp240 serves as the catalytic Proton donor. Substrate is bound at residue 250–251; the sequence is NK.

The protein belongs to the eIF-2B alpha/beta/delta subunits family. MtnA subfamily. In terms of assembly, homodimer.

It carries out the reaction 5-(methylsulfanyl)-alpha-D-ribose 1-phosphate = 5-(methylsulfanyl)-D-ribulose 1-phosphate. It functions in the pathway amino-acid biosynthesis; L-methionine biosynthesis via salvage pathway; L-methionine from S-methyl-5-thio-alpha-D-ribose 1-phosphate: step 1/6. In terms of biological role, catalyzes the interconversion of methylthioribose-1-phosphate (MTR-1-P) into methylthioribulose-1-phosphate (MTRu-1-P). This Bacillus licheniformis (strain ATCC 14580 / DSM 13 / JCM 2505 / CCUG 7422 / NBRC 12200 / NCIMB 9375 / NCTC 10341 / NRRL NRS-1264 / Gibson 46) protein is Methylthioribose-1-phosphate isomerase.